We begin with the raw amino-acid sequence, 80 residues long: Ubiquinol-cytochrome c reductase complex assembly factor 5 (80 aa).

The Mitochondrial matrix portion of the chain corresponds to 1–19 (MFSRAQVRRALQRVPGKQR). The chain crosses the membrane as a helical span at residues 20–41 (FGIYRFLPFFFVLGGAMEWIMI). The Mitochondrial intermembrane segment spans residues 42–80 (KVRVGQETFYDVYRRKASERQYQRRLEDTSETNLHKLIK).

Belongs to the UQCC5 family. In terms of assembly, associates with the mitochondrial ribosome. Interacts with UQCC6. Interacts with MT-CYB; interacts with newly synthesizes MT-CYB. Forms a complex, named COMB/coordinator of mitochondrial CYTB biogenesis, composed of UQCC1, UQCC2, UQCC4, UQCC5 and UQCC6; stabilizes nascent cytochrome b/MT-CYB and promotes its membrane insertion.

The protein localises to the mitochondrion inner membrane. In terms of biological role, required for the assembly and stability of the mitochondrial ubiquinol-cytochrome c reductase complex (complex III (CIII) or cytochrome b-c1 complex), a multisubunit transmembrane complex that is part of the mitochondrial electron transport chain (ETC) which drives oxidative phosphorylation. Mediates early complex III biogenesis. Participates in regulating the levels of electron transport chain proteins, and therefore energy supply, in response to changes in energy demand. Also required for cytochrome c oxidase complex (complex IV) assembly. The sequence is that of Ubiquinol-cytochrome c reductase complex assembly factor 5 from Mus musculus (Mouse).